Reading from the N-terminus, the 379-residue chain is Lipid-A-disaccharide synthase (379 aa).

The protein belongs to the LpxB family.

It catalyses the reaction a lipid X + a UDP-2-N,3-O-bis[(3R)-3-hydroxyacyl]-alpha-D-glucosamine = a lipid A disaccharide + UDP + H(+). It participates in bacterial outer membrane biogenesis; LPS lipid A biosynthesis. Condensation of UDP-2,3-diacylglucosamine and 2,3-diacylglucosamine-1-phosphate to form lipid A disaccharide, a precursor of lipid A, a phosphorylated glycolipid that anchors the lipopolysaccharide to the outer membrane of the cell. In Vibrio parahaemolyticus serotype O3:K6 (strain RIMD 2210633), this protein is Lipid-A-disaccharide synthase.